Reading from the N-terminus, the 161-residue chain is ATP synthase subunit b (161 aa).

Residues 12–32 traverse the membrane as a helical segment; sequence IAFFLFVFFCMKYIWPNLISL.

The protein belongs to the ATPase B chain family. F-type ATPases have 2 components, F(1) - the catalytic core - and F(0) - the membrane proton channel. F(1) has five subunits: alpha(3), beta(3), gamma(1), delta(1), epsilon(1). F(0) has three main subunits: a(1), b(2) and c(10-14). The alpha and beta chains form an alternating ring which encloses part of the gamma chain. F(1) is attached to F(0) by a central stalk formed by the gamma and epsilon chains, while a peripheral stalk is formed by the delta and b chains.

The protein localises to the cell membrane. F(1)F(0) ATP synthase produces ATP from ADP in the presence of a proton or sodium gradient. F-type ATPases consist of two structural domains, F(1) containing the extramembraneous catalytic core and F(0) containing the membrane proton channel, linked together by a central stalk and a peripheral stalk. During catalysis, ATP synthesis in the catalytic domain of F(1) is coupled via a rotary mechanism of the central stalk subunits to proton translocation. In terms of biological role, component of the F(0) channel, it forms part of the peripheral stalk, linking F(1) to F(0). The polypeptide is ATP synthase subunit b (Wigglesworthia glossinidia brevipalpis).